The following is a 678-amino-acid chain: Penicillin-binding protein activator LpoA (678 aa).

An N-terminal signal peptide occupies residues 1-26 (MVPSTFSRLKAARCLPVVLAALIFAG). Cys27 is lipidated: N-palmitoyl cysteine. Cys27 carries the S-diacylglycerol cysteine lipid modification. Disordered regions lie at residues 302-340 (DVAE…PVSA) and 496-528 (ALTG…DDQF). Low complexity-rich tracts occupy residues 330-340 (QPAAQPVPVSA) and 513-528 (TTNN…DDQF).

This sequence belongs to the LpoA family. In terms of assembly, interacts with PBP1a.

It localises to the cell outer membrane. Regulator of peptidoglycan synthesis that is essential for the function of penicillin-binding protein 1A (PBP1a). The polypeptide is Penicillin-binding protein activator LpoA (Shigella sonnei (strain Ss046)).